Reading from the N-terminus, the 288-residue chain is uncharacterized protein (288 aa).

2 disordered regions span residues 31–52 (KAVD…EAPS) and 179–288 (YPSK…VELK). Residues 206–217 (RPSSPTNFSKLI) are compositionally biased toward polar residues. The span at 221-236 (YKDEWLQQQADSDKRA) shows a compositional bias: basic and acidic residues. Composition is skewed to low complexity over residues 237–249 (PQTP…SPSP) and 267–276 (AAESSPLSSA).

This is an uncharacterized protein from Bos taurus (Bovine).